The following is a 445-amino-acid chain: UDP-N-acetylmuramate--L-alanine ligase (445 aa).

ATP is bound at residue 108-114 (GSDGKTT).

It belongs to the MurCDEF family.

Its subcellular location is the cytoplasm. The catalysed reaction is UDP-N-acetyl-alpha-D-muramate + L-alanine + ATP = UDP-N-acetyl-alpha-D-muramoyl-L-alanine + ADP + phosphate + H(+). It functions in the pathway cell wall biogenesis; peptidoglycan biosynthesis. In terms of biological role, cell wall formation. The polypeptide is UDP-N-acetylmuramate--L-alanine ligase (Pseudothermotoga lettingae (strain ATCC BAA-301 / DSM 14385 / NBRC 107922 / TMO) (Thermotoga lettingae)).